We begin with the raw amino-acid sequence, 171 residues long: Large ribosomal subunit protein uL10 (171 aa).

The protein belongs to the universal ribosomal protein uL10 family. As to quaternary structure, part of the ribosomal stalk of the 50S ribosomal subunit. The N-terminus interacts with L11 and the large rRNA to form the base of the stalk. The C-terminus forms an elongated spine to which L12 dimers bind in a sequential fashion forming a multimeric L10(L12)X complex.

Functionally, forms part of the ribosomal stalk, playing a central role in the interaction of the ribosome with GTP-bound translation factors. The chain is Large ribosomal subunit protein uL10 from Corynebacterium efficiens (strain DSM 44549 / YS-314 / AJ 12310 / JCM 11189 / NBRC 100395).